Here is a 213-residue protein sequence, read N- to C-terminus: Histone H1.2 (213 aa).

Positions 1-17 are enriched in low complexity; that stretch reads MSETAPAAPAAAPPAEK. The tract at residues 1–41 is disordered; it reads MSETAPAAPAAAPPAEKTPVKKKAAKKPAGARRKASGPPVS. S2 is modified (N-acetylserine; partial). Residue S2 is modified to Phosphoserine. The residue at position 17 (K17) is an N6-acetyllysine. Positions 20–35 are enriched in basic residues; the sequence is VKKKAAKKPAGARRKA. 3 positions are modified to N6-(2-hydroxyisobutyryl)lysine: K23, K26, and K27. K34 carries the N6-(beta-hydroxybutyryl)lysine; alternate modification. K34 is modified (N6-crotonyllysine; alternate). Position 34 is an N6-methyllysine; alternate (K34). An H15 domain is found at 36-109; it reads SGPPVSELIT…GASGSFKLNK (74 aa). K46 is subject to N6-(2-hydroxyisobutyryl)lysine. K52 bears the N6-(beta-hydroxybutyryl)lysine; alternate mark. Position 52 is an N6-(2-hydroxyisobutyryl)lysine; alternate (K52). Position 54 is a citrulline (R54). K63 carries the post-translational modification N6-(2-hydroxyisobutyryl)lysine. Residue K64 is modified to N6-(beta-hydroxybutyryl)lysine; alternate. K64 carries the N6-crotonyllysine; alternate modification. An N6-(2-hydroxyisobutyryl)lysine; alternate modification is found at K64. Residues K75 and K81 each carry the N6-(2-hydroxyisobutyryl)lysine modification. Residues K85 and K90 each carry the N6-(beta-hydroxybutyryl)lysine; alternate modification. Residues K85, K90, and K97 each carry the N6-crotonyllysine; alternate modification. K85, K90, and K97 each carry N6-(2-hydroxyisobutyryl)lysine; alternate. Positions 95 to 213 are disordered; sequence QTKGTGASGS…KPKKAAPKKK (119 aa). The residue at position 97 (K97) is an N6-succinyllysine; alternate. S104 is modified (phosphoserine; by PKC). Position 106 is an N6-(beta-hydroxybutyryl)lysine (K106). Residues K110, K117, K121, K129, and K136 each carry the N6-(2-hydroxyisobutyryl)lysine modification. Over residues 119–140 the composition is skewed to basic residues; that stretch reads KAKKAGAAKPKKAAGAAKKTKK. A Phosphothreonine modification is found at T146. K148 is modified (N6-(2-hydroxyisobutyryl)lysine). Over residues 149-160 the composition is skewed to basic residues; it reads KTAKKTPKKAKK. Residues K159 and K168 each carry the N6-crotonyllysine; alternate modification. K159 and K168 each carry N6-(2-hydroxyisobutyryl)lysine; alternate. Residues 169–186 are compositionally biased toward basic residues; the sequence is KVAKSPKKAKAAKPKKAA. An N6-methyllysine; by EHMT1 and EHMT2 modification is found at K187. S188 carries the post-translational modification ADP-ribosylserine. A compositionally biased stretch (basic residues) spans 193 to 213; sequence VKPKAAKPKVAKPKKAAPKKK.

The protein belongs to the histone H1/H5 family. Post-translationally, H1 histones are progressively phosphorylated during the cell cycle, becoming maximally phosphorylated during late G2 phase and M phase, and being dephosphorylated sharply thereafter. In terms of processing, crotonylation (Kcr) is specifically present in male germ cells and marks testis-specific genes in post-meiotic cells, including X-linked genes that escape sex chromosome inactivation in haploid cells. Crotonylation marks active promoters and enhancers and confers resistance to transcriptional repressors. It is also associated with post-meiotically activated genes on autosomes. ADP-ribosylated on Ser-188 in response to DNA damage. Post-translationally, citrullination at Arg-54 (H1R54ci) by PADI4 takes place within the DNA-binding site of H1 and results in its displacement from chromatin and global chromatin decondensation, thereby promoting pluripotency and stem cell maintenance.

The protein resides in the nucleus. Its subcellular location is the chromosome. Its function is as follows. Histone H1 protein binds to linker DNA between nucleosomes forming the macromolecular structure known as the chromatin fiber. Histones H1 are necessary for the condensation of nucleosome chains into higher-order structured fibers. Also acts as a regulator of individual gene transcription through chromatin remodeling, nucleosome spacing and DNA methylation. The polypeptide is Histone H1.2 (Bos taurus (Bovine)).